The primary structure comprises 345 residues: Protein RecA (345 aa).

Residue 66–73 (GPESSGKT) coordinates ATP.

Belongs to the RecA family.

It localises to the cytoplasm. Functionally, can catalyze the hydrolysis of ATP in the presence of single-stranded DNA, the ATP-dependent uptake of single-stranded DNA by duplex DNA, and the ATP-dependent hybridization of homologous single-stranded DNAs. It interacts with LexA causing its activation and leading to its autocatalytic cleavage. The sequence is that of Protein RecA from Frankia casuarinae (strain DSM 45818 / CECT 9043 / HFP020203 / CcI3).